Reading from the N-terminus, the 369-residue chain is Probable L-tyrosine/L-aspartate decarboxylase (369 aa).

K224 bears the N6-(pyridoxal phosphate)lysine mark.

This sequence belongs to the group II decarboxylase family. MfnA subfamily. Pyridoxal 5'-phosphate is required as a cofactor.

It catalyses the reaction L-tyrosine + H(+) = tyramine + CO2. The enzyme catalyses L-aspartate + H(+) = beta-alanine + CO2. It functions in the pathway cofactor biosynthesis; methanofuran biosynthesis. Its pathway is cofactor biosynthesis; coenzyme A biosynthesis. Catalyzes the decarboxylation of L-tyrosine to produce tyramine for methanofuran biosynthesis. Can also catalyze the decarboxylation of L-aspartate to produce beta-alanine for coenzyme A (CoA) biosynthesis. The chain is Probable L-tyrosine/L-aspartate decarboxylase from Methanospirillum hungatei JF-1 (strain ATCC 27890 / DSM 864 / NBRC 100397 / JF-1).